A 183-amino-acid chain; its full sequence is Bifunctional protein PyrR (183 aa).

A PRPP-binding motif is present at residues 102 to 114 (VVLVDDVLYTGRT).

This sequence belongs to the purine/pyrimidine phosphoribosyltransferase family. PyrR subfamily. In terms of assembly, homodimer and homohexamer; in equilibrium.

The catalysed reaction is UMP + diphosphate = 5-phospho-alpha-D-ribose 1-diphosphate + uracil. Its function is as follows. Regulates transcriptional attenuation of the pyrimidine nucleotide (pyr) operon by binding in a uridine-dependent manner to specific sites on pyr mRNA. This disrupts an antiterminator hairpin in the RNA and favors formation of a downstream transcription terminator, leading to a reduced expression of downstream genes. Also displays a weak uracil phosphoribosyltransferase activity which is not physiologically significant. This chain is Bifunctional protein PyrR, found in Listeria welshimeri serovar 6b (strain ATCC 35897 / DSM 20650 / CCUG 15529 / CIP 8149 / NCTC 11857 / SLCC 5334 / V8).